A 122-amino-acid chain; its full sequence is Large ribosomal subunit protein uL14 (122 aa).

Belongs to the universal ribosomal protein uL14 family. In terms of assembly, part of the 50S ribosomal subunit. Forms a cluster with proteins L3 and L19. In the 70S ribosome, L14 and L19 interact and together make contacts with the 16S rRNA in bridges B5 and B8.

Binds to 23S rRNA. Forms part of two intersubunit bridges in the 70S ribosome. The protein is Large ribosomal subunit protein uL14 of Jannaschia sp. (strain CCS1).